Reading from the N-terminus, the 75-residue chain is UPF0270 protein PFLU_4323 (75 aa).

This sequence belongs to the UPF0270 family.

The protein is UPF0270 protein PFLU_4323 of Pseudomonas fluorescens (strain SBW25).